Consider the following 486-residue polypeptide: Arginine deiminase (486 aa).

Residue Cys-476 is the Amidino-cysteine intermediate of the active site.

Belongs to the arginine deiminase family.

It is found in the cytoplasm. It catalyses the reaction L-arginine + H2O = L-citrulline + NH4(+). It participates in amino-acid degradation; L-arginine degradation via ADI pathway; carbamoyl phosphate from L-arginine: step 1/2. Functionally, involved in the arginine deiminase pathway of fermentative arginine utilization. The polypeptide is Arginine deiminase (arcA) (Halobacterium salinarum (strain ATCC 29341 / DSM 671 / R1)).